Reading from the N-terminus, the 197-residue chain is Probable GTP-binding protein EngB (197 aa).

An EngB-type G domain is found at 25 to 197; sequence SAPEIAFAGR…VRDEFFKFTR (173 aa). GTP-binding positions include 33–40, 60–64, 79–82, 146–149, and 177–179; these read GRSNVGKS, GCTRQ, DLPG, TKID, and MSI. S40 and T62 together coordinate Mg(2+).

It belongs to the TRAFAC class TrmE-Era-EngA-EngB-Septin-like GTPase superfamily. EngB GTPase family. The cofactor is Mg(2+).

Functionally, necessary for normal cell division and for the maintenance of normal septation. This is Probable GTP-binding protein EngB from Wolbachia sp. subsp. Drosophila simulans (strain wRi).